A 633-amino-acid polypeptide reads, in one-letter code: Chitinase 2 (633 aa).

Residues 151–602 (PKLSAYITDW…NAAREGLGYV (452 aa)) enclose the GH18 domain. Chitin-binding positions include 275-276 (QN) and 306-309 (GGWS). The active-site Proton donor is glutamate 349. Chitin-binding positions include tyrosine 350, 422–425 (MSYD), and tryptophan 582.

This sequence belongs to the glycosyl hydrolase 18 family. Semipurified toxin complex consists of at least YenA1-YenA2-YenB-YenC1-YenC2-Chi1-Chi2. The Yen-TC:K9 subcomplex is about 26 nm tall and 22 nm in diameter with 5-fold symmetry and 5 copies of YenA1, YenA2, Chi1 and Chi2; the chitinase subunits may be solvent accessible on the exterior the complex. The Yen-TC:K9 subcomplex has no insecticidal activity. The native complex with additional YenB, YenC1 and YenC2 subunits is 16 nm taller and is insecticidal; the toxicity-conferring subunits are present at about 1 copy each.

The protein resides in the secreted. It carries out the reaction Random endo-hydrolysis of N-acetyl-beta-D-glucosaminide (1-&gt;4)-beta-linkages in chitin and chitodextrins.. Toxin complex is secreted when grown at 25 degrees Celsius or less; at higher temperatures the proteins are present intracellularly but not secreted. Its function is as follows. Part of an orally active toxin complex (TC) with strong insecticidal effects on larvae of the Coleoptera Costelytra zealandica, Acrossidius tasmania and Adoryphorus couloni and some Lepidoptera larvae. The TC has an endochitinase activity. This subunit might aid infection by degradation of the larval peritrophic membrane. In Yersinia entomophaga, this protein is Chitinase 2.